An 87-amino-acid polypeptide reads, in one-letter code: Chromosomal protein MC1b (87 aa).

Functionally, protects DNA against thermal denaturation and modulates transcription. The protein is Chromosomal protein MC1b of Methanothrix soehngenii (Methanosaeta concilii).